A 309-amino-acid polypeptide reads, in one-letter code: Homoserine O-succinyltransferase (309 aa).

Cysteine 142 serves as the catalytic Acyl-thioester intermediate. The substrate site is built by lysine 163 and serine 192. Histidine 235 functions as the Proton acceptor in the catalytic mechanism. Residue glutamate 237 is part of the active site. Arginine 249 contacts substrate.

This sequence belongs to the MetA family.

Its subcellular location is the cytoplasm. It catalyses the reaction L-homoserine + succinyl-CoA = O-succinyl-L-homoserine + CoA. It functions in the pathway amino-acid biosynthesis; L-methionine biosynthesis via de novo pathway; O-succinyl-L-homoserine from L-homoserine: step 1/1. In terms of biological role, transfers a succinyl group from succinyl-CoA to L-homoserine, forming succinyl-L-homoserine. This chain is Homoserine O-succinyltransferase, found in Cronobacter sakazakii (strain ATCC BAA-894) (Enterobacter sakazakii).